A 401-amino-acid chain; its full sequence is Enolase (401 aa).

Q154 provides a ligand contact to (2R)-2-phosphoglycerate. E196 serves as the catalytic Proton donor. D232, E275, and D302 together coordinate Mg(2+). (2R)-2-phosphoglycerate contacts are provided by K327, R356, S357, and K378. K327 functions as the Proton acceptor in the catalytic mechanism.

Belongs to the enolase family. It depends on Mg(2+) as a cofactor.

It is found in the cytoplasm. The protein localises to the secreted. Its subcellular location is the cell surface. It catalyses the reaction (2R)-2-phosphoglycerate = phosphoenolpyruvate + H2O. Its pathway is carbohydrate degradation; glycolysis; pyruvate from D-glyceraldehyde 3-phosphate: step 4/5. In terms of biological role, catalyzes the reversible conversion of 2-phosphoglycerate (2-PG) into phosphoenolpyruvate (PEP). It is essential for the degradation of carbohydrates via glycolysis. This is Enolase from Haloarcula marismortui (strain ATCC 43049 / DSM 3752 / JCM 8966 / VKM B-1809) (Halobacterium marismortui).